A 304-amino-acid chain; its full sequence is Glutaminase (304 aa).

Substrate contacts are provided by S63, N113, E157, N164, Y188, Y240, and V258.

The protein belongs to the glutaminase family. As to quaternary structure, homotetramer.

The enzyme catalyses L-glutamine + H2O = L-glutamate + NH4(+). This Christiangramia forsetii (strain DSM 17595 / CGMCC 1.15422 / KT0803) (Gramella forsetii) protein is Glutaminase.